An 891-amino-acid chain; its full sequence is Alanine--tRNA ligase (891 aa).

Residues histidine 574, histidine 578, cysteine 676, and histidine 680 each contribute to the Zn(2+) site.

This sequence belongs to the class-II aminoacyl-tRNA synthetase family. The cofactor is Zn(2+).

It is found in the cytoplasm. It carries out the reaction tRNA(Ala) + L-alanine + ATP = L-alanyl-tRNA(Ala) + AMP + diphosphate. In terms of biological role, catalyzes the attachment of alanine to tRNA(Ala) in a two-step reaction: alanine is first activated by ATP to form Ala-AMP and then transferred to the acceptor end of tRNA(Ala). Also edits incorrectly charged Ser-tRNA(Ala) and Gly-tRNA(Ala) via its editing domain. This is Alanine--tRNA ligase from Synechococcus sp. (strain WH7803).